A 389-amino-acid chain; its full sequence is MTTSVCLLGASGSVGESTLKVLRAYPEKFRLHSFSVHSNLEKAKEIQKEFSPDFICVSSDFADVGVLGNKLGRTQILYGESSLCELVREPEVEIVITAIVGSVGLRPTIAAITAGKRLGIANKETLVTSGPLIQSLIAKHNTKVVPVDSEHNALFQLLESLNPNSVEKIILTASGGAFRDLPVEQLSSVTKEQALHHPTWNMGPKITIDSNGMINKGLEVIEAHFLFNVPYDKIGVVIHPQSIAHGIVELKDGASFLYASYPDMIFPIAHSLFHPEPVPKVLRSYPAKDWGKLEFREPDFKRYPGLGLAFEAGKVGGTAPCIFNAANEAAVELFLKDEIRFIEIPDYIRKTLDEIKIEFPLSLEEYEEADRIARETVRNLKARKVVSAC.

NADPH-binding residues include S11, G12, S13, V14, N39, and N122. K123 is a 1-deoxy-D-xylulose 5-phosphate binding site. E124 contributes to the NADPH binding site. D148 lines the Mn(2+) pocket. Residues S149, E150, S174, and H197 each coordinate 1-deoxy-D-xylulose 5-phosphate. E150 lines the Mn(2+) pocket. G203 contributes to the NADPH binding site. 1-deoxy-D-xylulose 5-phosphate is bound by residues S210, N215, K216, and E219. A Mn(2+)-binding site is contributed by E219.

The protein belongs to the DXR family. It depends on Mg(2+) as a cofactor. Mn(2+) is required as a cofactor.

It catalyses the reaction 2-C-methyl-D-erythritol 4-phosphate + NADP(+) = 1-deoxy-D-xylulose 5-phosphate + NADPH + H(+). It functions in the pathway isoprenoid biosynthesis; isopentenyl diphosphate biosynthesis via DXP pathway; isopentenyl diphosphate from 1-deoxy-D-xylulose 5-phosphate: step 1/6. Functionally, catalyzes the NADPH-dependent rearrangement and reduction of 1-deoxy-D-xylulose-5-phosphate (DXP) to 2-C-methyl-D-erythritol 4-phosphate (MEP). The sequence is that of 1-deoxy-D-xylulose 5-phosphate reductoisomerase from Leptospira interrogans serogroup Icterohaemorrhagiae serovar copenhageni (strain Fiocruz L1-130).